A 290-amino-acid polypeptide reads, in one-letter code: Cbb3-type cytochrome c oxidase subunit FixP (290 aa).

Residues Trp-33–Pro-53 traverse the membrane as a helical segment. Cytochrome c domains are found at residues Leu-109–Ser-198 and Tyr-206–Gly-287. Residues Cys-122, Cys-125, His-126, Met-173, Cys-219, Cys-222, His-223, and Met-264 each coordinate heme c.

It belongs to the CcoP / FixP family. As to quaternary structure, component of the cbb3-type cytochrome c oxidase at least composed of FixN, FixO, FixQ and FixP. The cofactor is heme c.

It is found in the cell inner membrane. Its pathway is energy metabolism; oxidative phosphorylation. Its function is as follows. C-type cytochrome. Part of the cbb3-type cytochrome c oxidase complex. FixP subunit is required for transferring electrons from donor cytochrome c via its heme groups to FixO subunit. From there, electrons are shuttled to the catalytic binuclear center of FixN subunit where oxygen reduction takes place. The complex also functions as a proton pump. This Bradyrhizobium sp. (strain ORS 278) protein is Cbb3-type cytochrome c oxidase subunit FixP.